Here is a 398-residue protein sequence, read N- to C-terminus: 1-deoxy-D-xylulose 5-phosphate reductoisomerase (398 aa).

NADPH is bound by residues Thr-11, Gly-12, Ser-13, Ile-14, Arg-38, Asn-39, and Asn-125. Lys-126 lines the 1-deoxy-D-xylulose 5-phosphate pocket. Glu-127 serves as a coordination point for NADPH. Position 151 (Asp-151) interacts with Mn(2+). The 1-deoxy-D-xylulose 5-phosphate site is built by Ser-152, Glu-153, Ser-179, and His-202. Glu-153 contributes to the Mn(2+) binding site. NADPH is bound at residue Gly-208. 1-deoxy-D-xylulose 5-phosphate-binding residues include Ser-215, Asn-220, Lys-221, and Glu-224. Glu-224 contributes to the Mn(2+) binding site.

Belongs to the DXR family. Mg(2+) serves as cofactor. Requires Mn(2+) as cofactor.

The enzyme catalyses 2-C-methyl-D-erythritol 4-phosphate + NADP(+) = 1-deoxy-D-xylulose 5-phosphate + NADPH + H(+). It participates in isoprenoid biosynthesis; isopentenyl diphosphate biosynthesis via DXP pathway; isopentenyl diphosphate from 1-deoxy-D-xylulose 5-phosphate: step 1/6. Its function is as follows. Catalyzes the NADPH-dependent rearrangement and reduction of 1-deoxy-D-xylulose-5-phosphate (DXP) to 2-C-methyl-D-erythritol 4-phosphate (MEP). In Burkholderia pseudomallei (strain 1106a), this protein is 1-deoxy-D-xylulose 5-phosphate reductoisomerase.